The sequence spans 199 residues: TATA-box-binding protein (199 aa).

2 tandem repeats follow at residues 10–86 and 101–177.

It belongs to the TBP family.

Its function is as follows. General factor that plays a role in the activation of archaeal genes transcribed by RNA polymerase. Binds specifically to the TATA box promoter element which lies close to the position of transcription initiation. The chain is TATA-box-binding protein from Pyrobaculum aerophilum (strain ATCC 51768 / DSM 7523 / JCM 9630 / CIP 104966 / NBRC 100827 / IM2).